Reading from the N-terminus, the 254-residue chain is 3-deoxy-manno-octulosonate cytidylyltransferase (254 aa).

This sequence belongs to the KdsB family.

The protein resides in the cytoplasm. It catalyses the reaction 3-deoxy-alpha-D-manno-oct-2-ulosonate + CTP = CMP-3-deoxy-beta-D-manno-octulosonate + diphosphate. The protein operates within nucleotide-sugar biosynthesis; CMP-3-deoxy-D-manno-octulosonate biosynthesis; CMP-3-deoxy-D-manno-octulosonate from 3-deoxy-D-manno-octulosonate and CTP: step 1/1. It functions in the pathway bacterial outer membrane biogenesis; lipopolysaccharide biosynthesis. Its function is as follows. Activates KDO (a required 8-carbon sugar) for incorporation into bacterial lipopolysaccharide in Gram-negative bacteria. This Pseudomonas fluorescens (strain ATCC BAA-477 / NRRL B-23932 / Pf-5) protein is 3-deoxy-manno-octulosonate cytidylyltransferase.